A 777-amino-acid polypeptide reads, in one-letter code: Cyclin-F (777 aa).

The short motif at Lys-20–Arg-28 is the Nuclear localization signal 1 element. Residues Asn-29 to Ala-76 enclose the F-box domain. The Cyclin N-terminal domain occupies Gln-288–Ile-405. 3 short sequence motifs (d box) span residues Arg-310–Leu-313, Arg-343–Leu-346, and Arg-349–Leu-352. 2 disordered regions span residues Gln-544–Ala-591 and Gln-651–Ser-777. Positions Arg-568–Arg-574 match the Nuclear localization signal 2 motif. The segment at Arg-582–Lys-761 is PEST. 2 stretches are compositionally biased toward low complexity: residues Ser-695–Ser-708 and Ser-719–Thr-731. Residues Pro-751–Val-767 show a composition bias toward polar residues. The D box 4 signature appears at Arg-762 to Leu-765. Residues His-768–Ser-777 are compositionally biased toward basic and acidic residues.

Belongs to the cyclin family. Cyclin AB subfamily. Component of the SCF(CCNF) complex consisting of CUL1, RBX1, SKP1 and CCNF. Interacts with SKP1. Interacts with CUL1. Interacts with CCNB1; interaction is required for nuclear localization of CCNB1. Interacts with CCP110; this interaction leads to CCP110 ubiquitination and degradation via the proteasome pathway. Interacts (via the Cyclin N-terminal domain) with MYBL2/BMYB. Interacts with FZR1/CDH1 (via N-terminus). Interacts with RRM2 (via Cy motif and when phosphorylated at 'Thr-33'); the interaction occurs exclusively in G2 and early M. Interacts with CDC6 (via Cy motif); the interaction takes place during G2 and M phase. In terms of processing, degraded when the spindle assembly checkpoint is activated during the G2-M transition. Degradation is not dependent on the proteasome or ubiquitin and depends on the C-terminal PEST sequence. Post-translationally, phosphorylated just before cells enter into mitosis. Ubiquitinated by the anaphase-promoting complex (APC/C); leading to its degradation by the proteasome.

The protein resides in the nucleus. Its subcellular location is the cytoplasm. It is found in the perinuclear region. It localises to the cytoskeleton. The protein localises to the microtubule organizing center. The protein resides in the centrosome. Its subcellular location is the centriole. In terms of biological role, substrate recognition component of a SCF (SKP1-CUL1-F-box protein) E3 ubiquitin-protein ligase complex which mediates the ubiquitination and subsequent proteasomal degradation of target proteins. The SCF(CCNF) E3 ubiquitin-protein ligase complex is an integral component of the ubiquitin proteasome system (UPS) and links proteasome degradation to the cell cycle. Mediates the substrate recognition and the proteasomal degradation of various target proteins involved in the regulation of cell cycle progression and in the maintenance of genome stability. Mediates the ubiquitination and subsequent proteasomal degradation of CP110 during G2 phase, thereby acting as an inhibitor of centrosome reduplication. In G2, mediates the ubiquitination and proteasomal degradation of CDC6, thereby suppressing DNA re-replication and preventing genome instability. Involved in the ubiquitination and degradation of the substrate adapter CDH1 of the anaphase-promoting complex (APC/C), thereby acting as an antagonist of APC/C in regulating G1 progression and S phase entry. May play a role in the G2 cell cycle checkpoint control after DNA damage, possibly by promoting the ubiquitination of MYBL2/BMYB. This Mus musculus (Mouse) protein is Cyclin-F (Ccnf).